A 106-amino-acid polypeptide reads, in one-letter code: Small ribosomal subunit protein uS10 (106 aa).

This sequence belongs to the universal ribosomal protein uS10 family. In terms of assembly, part of the 30S ribosomal subunit.

Involved in the binding of tRNA to the ribosomes. The polypeptide is Small ribosomal subunit protein uS10 (Synechococcus sp. (strain CC9902)).